The sequence spans 200 residues: NADH-quinone oxidoreductase subunit C (200 aa).

Belongs to the complex I 30 kDa subunit family. In terms of assembly, NDH-1 is composed of 14 different subunits. Subunits NuoB, C, D, E, F, and G constitute the peripheral sector of the complex.

The protein localises to the cell inner membrane. The enzyme catalyses a quinone + NADH + 5 H(+)(in) = a quinol + NAD(+) + 4 H(+)(out). Functionally, NDH-1 shuttles electrons from NADH, via FMN and iron-sulfur (Fe-S) centers, to quinones in the respiratory chain. The immediate electron acceptor for the enzyme in this species is believed to be ubiquinone. Couples the redox reaction to proton translocation (for every two electrons transferred, four hydrogen ions are translocated across the cytoplasmic membrane), and thus conserves the redox energy in a proton gradient. The protein is NADH-quinone oxidoreductase subunit C of Thiobacillus denitrificans (strain ATCC 25259 / T1).